The following is a 318-amino-acid chain: NAC domain-containing protein 59 (318 aa).

Positions 24 to 174 (LPPGFRFHPT…ECVISRVFHT (151 aa)) constitute an NAC domain. The DNA-binding element occupies 121–180 (VGMKKTLVFYKGRAPKGVKTNWVMHEYRLEGKFAIDNLSKTAKNECVISRVFHTRTDGTK).

Mostly expressed in root cortex, phloem, atrichoblast and quiescent center (QC), and, to a lower extent, in root endodermis, xylem, pericycle, columella and lateral root cap (LRC). Expressed in roots, cotyledons, very young leaves, senescing leaves, mature flowers and pollen.

It is found in the nucleus. Functionally, transcription activator that binds to DNA in promoters of target genes on a specific bipartite motif 5'-[AG]CGT[AG](4-5n)[AG][CT]ACGCAA-3'. Triggers the expression of senescence-associated genes during age-, salt- and dark-induced senescence through a regulatory network that may involve cross-talk with salt- and H(2)O(2)-dependent signaling pathways. This is NAC domain-containing protein 59 from Arabidopsis thaliana (Mouse-ear cress).